Here is a 528-residue protein sequence, read N- to C-terminus: ATP synthase F(1) complex catalytic subunit beta, mitochondrial (528 aa).

A mitochondrion-targeting transit peptide spans 1-46; that stretch reads MLGLVGRVVAASASGALRGLSPSAPLPQAQLLLRAAPAALQPARDY. O-linked (GlcNAc) serine glycosylation is present at serine 106. An N6-acetyllysine; alternate mark is found at lysine 124 and lysine 161. Lysine 124 and lysine 161 each carry N6-succinyllysine; alternate. Lysine 198 carries the post-translational modification N6-acetyllysine. Positions 209, 210, 211, 212, 213, and 214 each coordinate ADP. Glycine 209 contributes to the ATP binding site. Positions 209, 210, 211, 212, and 213 each coordinate phosphate. ATP-binding residues include glycine 211, lysine 212, threonine 213, and valine 214. Position 213 (threonine 213) interacts with Mg(2+). Glutamate 238 is a Mg(2+) binding site. An ATP-binding site is contributed by arginine 239. N6-acetyllysine; alternate is present on residues lysine 259 and lysine 264. Lysine 259 and lysine 264 each carry N6-succinyllysine; alternate. Position 312 is a phosphothreonine (threonine 312). Serine 415 carries the post-translational modification Phosphoserine. Position 426 is an N6-acetyllysine (lysine 426). Serine 433 carries the phosphoserine modification. N6-acetyllysine is present on residues lysine 480 and lysine 485. The residue at position 522 (lysine 522) is an N6-acetyllysine; alternate. Lysine 522 carries the N6-succinyllysine; alternate modification.

This sequence belongs to the ATPase alpha/beta chains family. In terms of assembly, homotrimer. Component of the ATP synthase complex composed at least of ATP5F1A/subunit alpha, ATP5F1B/subunit beta, ATP5MC1/subunit c (homooctomer), MT-ATP6/subunit a, MT-ATP8/subunit 8, ATP5ME/subunit e, ATP5MF/subunit f, ATP5MG/subunit g, ATP5MK/subunit k, ATP5MJ/subunit j, ATP5F1C/subunit gamma, ATP5F1D/subunit delta, ATP5F1E/subunit epsilon, ATP5PF/subunit F6, ATP5PB/subunit b, ATP5PD/subunit d, ATP5PO/subunit OSCP. ATP synthase complex consists of a soluble F(1) head domain (subunits alpha(3) and beta(3)) - the catalytic core - and a membrane F(0) domain - the membrane proton channel (subunits c, a, 8, e, f, g, k and j). These two domains are linked by a central stalk (subunits gamma, delta, and epsilon) rotating inside the F1 region and a stationary peripheral stalk (subunits F6, b, d, and OSCP). Interacts with PPIF. Interacts with BCL2L1 isoform BCL-X(L); the interaction mediates the association of BCL2L1 isoform BCL-X(L) with the mitochondrial membrane F(1)F(0) ATP synthase and enhances neurons metabolic efficiency. Interacts with CLN5 and PPT1. Interacts with S100A1; this interaction increases F1-ATPase activity. Interacts with MTLN. Interacts with TTC5/STRAP; the interaction results in decreased mitochondrial ATP production.

It localises to the mitochondrion inner membrane. It catalyses the reaction ATP + H2O + 4 H(+)(in) = ADP + phosphate + 5 H(+)(out). In terms of biological role, catalytic subunit beta, of the mitochondrial membrane ATP synthase complex (F(1)F(0) ATP synthase or Complex V) that produces ATP from ADP in the presence of a proton gradient across the membrane which is generated by electron transport complexes of the respiratory chain. ATP synthase complex consist of a soluble F(1) head domain - the catalytic core - and a membrane F(1) domain - the membrane proton channel. These two domains are linked by a central stalk rotating inside the F(1) region and a stationary peripheral stalk. During catalysis, ATP synthesis in the catalytic domain of F(1) is coupled via a rotary mechanism of the central stalk subunits to proton translocation. In vivo, can only synthesize ATP although its ATP hydrolase activity can be activated artificially in vitro. With the subunit alpha (ATP5F1A), forms the catalytic core in the F(1) domain. In Bos taurus (Bovine), this protein is ATP synthase F(1) complex catalytic subunit beta, mitochondrial.